The sequence spans 223 residues: MKPIIPPQNLSELLERANMMAGISLAQIAAHRGIAVPKDLKRDKGWVGQLIEMELGATAGSKPEQDFLHLGVELKTIPIDSKGKPLETTYVCVAPLTNIEGLTWQDSLVCHKLQRVLWVPVEGERHIPVGDRRVGTPILWEPDLQEQRLLQQDWEEIMELIALGKVEKLTARHGEVLQLRPKAANSKALTQSIAEDGSLKMTNPRGFYLKTAFTAMLLNKVFG.

This sequence belongs to the MutH family.

Its subcellular location is the cytoplasm. Sequence-specific endonuclease that cleaves unmethylated GATC sequences. It is involved in DNA mismatch repair. This is DNA mismatch repair protein MutH from Shewanella sp. (strain ANA-3).